A 277-amino-acid polypeptide reads, in one-letter code: uncharacterized protein (277 aa).

A signal peptide spans 1–25 (MNKKSIWSKTAFGSLFLLLGTAFTA). Cys-26 carries N-palmitoyl cysteine lipidation. A lipid anchor (S-diacylglycerol cysteine) is attached at Cys-26.

Belongs to the MG439/MG440 family.

The protein resides in the cell membrane. This is an uncharacterized protein from Mycoplasma pneumoniae (strain ATCC 29342 / M129 / Subtype 1) (Mycoplasmoides pneumoniae).